The chain runs to 733 residues: Catalase-peroxidase (733 aa).

The segment at residues 96–219 (WHSAGTYRTG…LAAVQMGLIY (124 aa)) is a cross-link (tryptophyl-tyrosyl-methioninium (Trp-Tyr) (with M-245)). Residue histidine 97 is the Proton acceptor of the active site. The segment at residues 219–245 (YVNPEGPNGNPDPLAAAKDIRETFARM) is a cross-link (tryptophyl-tyrosyl-methioninium (Tyr-Met) (with W-96)). A heme b-binding site is contributed by histidine 260.

It belongs to the peroxidase family. Peroxidase/catalase subfamily. In terms of assembly, homodimer or homotetramer. Heme b serves as cofactor. Formation of the three residue Trp-Tyr-Met cross-link is important for the catalase, but not the peroxidase activity of the enzyme.

The enzyme catalyses H2O2 + AH2 = A + 2 H2O. It carries out the reaction 2 H2O2 = O2 + 2 H2O. Bifunctional enzyme with both catalase and broad-spectrum peroxidase activity. The sequence is that of Catalase-peroxidase from Geobacter sp. (strain M21).